A 372-amino-acid polypeptide reads, in one-letter code: Aminomethyltransferase (372 aa).

The protein belongs to the GcvT family. As to quaternary structure, the glycine cleavage system is composed of four proteins: P, T, L and H.

It carries out the reaction N(6)-[(R)-S(8)-aminomethyldihydrolipoyl]-L-lysyl-[protein] + (6S)-5,6,7,8-tetrahydrofolate = N(6)-[(R)-dihydrolipoyl]-L-lysyl-[protein] + (6R)-5,10-methylene-5,6,7,8-tetrahydrofolate + NH4(+). The glycine cleavage system catalyzes the degradation of glycine. The polypeptide is Aminomethyltransferase (Prochlorococcus marinus (strain NATL2A)).